The chain runs to 331 residues: Dioxygenase swnH2 (331 aa).

Residues methionine 1–lysine 11 are compositionally biased toward polar residues. The interval methionine 1–isoleucine 31 is disordered. Over residues valine 13 to serine 23 the composition is skewed to basic and acidic residues. Fe cation contacts are provided by histidine 173, aspartate 175, and histidine 250.

Belongs to the PhyH family. In terms of assembly, homodimer. It depends on Fe cation as a cofactor.

The protein operates within mycotoxin biosynthesis. Dioxygenase; part of the gene cluster that mediates the biosynthesis of swainsonine (SW), a cytotoxic fungal alkaloid and a potential cancer therapy drug. Swainsonine production occurs via a multibranched pathway and is dispensable for fungal colonization of plants and infection of insect hosts. The first step of swainsonine biosynthesis is the production of the precursor pipecolic acid (PA) via conversion of L-lysine (Lys) to 1-piperideine-6-carboxylate (P6C) by the aminotransferase swnA, the latter being further reduced to PA by the reductase swnR. PA can be converted from lysine by both the SW biosynthetic cluster and the unclustered genes such as lysine cyclodeaminase. The PKS-NRPS hybrid synthetase swnK uptakes and condensates PA and malonyl-CoA with and without skipping of the ketoreductase (KR) domain in order to produce 3 intermediates, 1-oxoindolizidine, (1S)-1-hydroxyindolizin, and (1R)-1-hydroxyindolizine; with the transisomer (1S)-1-hydroxyindolizin being predominant. The terminal thioester reductase (TE) domain of swnK is involved in reduction of the thioester bond to release the intermediate aldehydes. The oxidoreductase swnN could contribute to the reduction of 1-oxoindolizidine to (1S)-1-hydroxyindolizin and (1R)-1-hydroxyindolizine, contributing to the major route of SW production. The dioxygenase swnH2 would be responsible for the oxidization of (1R)-1-hydroxyindolizine into (1R,2S)-1,2-dihydroxyindolizine and of (1S)-1-hydroxyindolizin to yield both (1R,2S)-1,2-dihydroxyindolizine and (1S,2S)-1,2-dihydroxyindolizine. The dioxygenase swnH1 then performs the conversion of the 1,2-dihydroxyindolizine epimers to SW. This chain is Dioxygenase swnH2, found in Metarhizium robertsii (strain ARSEF 23 / ATCC MYA-3075) (Metarhizium anisopliae (strain ARSEF 23)).